A 172-amino-acid polypeptide reads, in one-letter code: Bifunctional protein PyrR (172 aa).

The PRPP-binding signature appears at 93–105 (VILIDDVLYTGRT).

The protein belongs to the purine/pyrimidine phosphoribosyltransferase family. PyrR subfamily. Homodimer and homohexamer; in equilibrium.

The enzyme catalyses UMP + diphosphate = 5-phospho-alpha-D-ribose 1-diphosphate + uracil. Its function is as follows. Regulates transcriptional attenuation of the pyrimidine nucleotide (pyr) operon by binding in a uridine-dependent manner to specific sites on pyr mRNA. This disrupts an antiterminator hairpin in the RNA and favors formation of a downstream transcription terminator, leading to a reduced expression of downstream genes. Functionally, also displays a weak uracil phosphoribosyltransferase activity which is not physiologically significant. The sequence is that of Bifunctional protein PyrR from Streptococcus sanguinis (strain SK36).